Consider the following 513-residue polypeptide: Histidine ammonia-lyase (513 aa).

Positions 143–145 (ASG) form a cross-link, 5-imidazolinone (Ala-Gly). S144 is modified (2,3-didehydroalanine (Ser)).

This sequence belongs to the PAL/histidase family. Contains an active site 4-methylidene-imidazol-5-one (MIO), which is formed autocatalytically by cyclization and dehydration of residues Ala-Ser-Gly.

It is found in the cytoplasm. The enzyme catalyses L-histidine = trans-urocanate + NH4(+). It functions in the pathway amino-acid degradation; L-histidine degradation into L-glutamate; N-formimidoyl-L-glutamate from L-histidine: step 1/3. In Xanthomonas campestris pv. campestris (strain B100), this protein is Histidine ammonia-lyase.